The following is a 396-amino-acid chain: MIISAASDYRAAAQRTLPPFLFHYIDGGAYAEYTLRRNVEDLSQVALRQRVLKNMSDLSLETTLFNETLPMPVALAPVGLCGMYARRGEVQAAAAADAKGIPFTLSTVSVCPIEEVAPTIQRPMWFQLYVLRDRGFMRNALERAKAAGCSTLVFTVDMPTPGARYRDAHSGMSGPNAAMLRYWQAVMHPKWAWDVGLNGRPHDLGNISAYLGKPTGLEDYIGWLANNFDPSISWKDLEWIREFWDGPMVIKGILDPEDARDAVRFGADGIVVSNHGGRQLDGVLSSARALPAIADAVKGDIAILADSGIRNGLDVVRMIALGADTVLLGRAYLYALATAGKAGVANLLDLIEKEMKVAMTLTGAKTISEISGDSLVQELGKSLPAALAPMSKGDAA.

Positions 1-380 constitute an FMN hydroxy acid dehydrogenase domain; sequence MIISAASDYR…SGDSLVQELG (380 aa). Tyr24 provides a ligand contact to substrate. FMN contacts are provided by Ser106 and Gln127. Tyr129 serves as a coordination point for substrate. Position 155 (Thr155) interacts with FMN. Arg164 provides a ligand contact to substrate. Lys251 is a binding site for FMN. The active-site Proton acceptor is the His275. Arg278 is a substrate binding site. 306-330 is an FMN binding site; sequence DSGIRNGLDVVRMIALGADTVLLGR.

It belongs to the FMN-dependent alpha-hydroxy acid dehydrogenase family. It depends on FMN as a cofactor.

The protein resides in the cell inner membrane. The enzyme catalyses (S)-lactate + A = pyruvate + AH2. In terms of biological role, catalyzes the conversion of L-lactate to pyruvate. Is coupled to the respiratory chain. In Salmonella choleraesuis (strain SC-B67), this protein is L-lactate dehydrogenase.